A 130-amino-acid polypeptide reads, in one-letter code: Protein ApaG (130 aa).

An ApaG domain is found at 3 to 127 (SEVTRSIRVT…FSLDSPHGRS (125 aa)).

The chain is Protein ApaG from Rhodospirillum centenum (strain ATCC 51521 / SW).